Consider the following 721-residue polypeptide: Solute carrier family 12 member 8 (721 aa).

A run of 11 helical transmembrane segments spans residues 53–73 (FGTW…VVLF), 84–104 (GVLL…VTVL), 115–135 (IGSG…VGGT), 136–156 (IGVL…TGFA), 174–194 (ISLA…KWII), 196–216 (LQLL…IGSF), 247–267 (FFTV…GFNM), 283–303 (LAAI…LGAI), 321–341 (LVGG…CMGG), 374–394 (PVAA…IGQV), and 397–417 (LAPI…YSYF). Disordered stretches follow at residues 473–505 (PNHT…KQTL) and 533–580 (NESQ…STVA). Positions 553 to 565 (TESDEPDSEEDVD) are enriched in acidic residues. The next 2 helical transmembrane spans lie at 606-626 (FLGA…YALV) and 628-648 (LGVA…LNPG).

Belongs to the SLC12A transporter family.

It localises to the membrane. Its function is as follows. Cation/chloride cotransporter. This Xenopus laevis (African clawed frog) protein is Solute carrier family 12 member 8 (slc12a8).